The following is a 148-amino-acid chain: Small ribosomal subunit protein uS7m (148 aa).

It belongs to the universal ribosomal protein uS7 family. As to quaternary structure, part of the small ribosomal subunit.

It localises to the mitochondrion. Functionally, one of the primary rRNA binding proteins, it binds directly to 18S rRNA where it nucleates assembly of the head domain of the small subunit. The protein is Small ribosomal subunit protein uS7m (RPS7) of Triticum aestivum (Wheat).